We begin with the raw amino-acid sequence, 357 residues long: Probable nitronate monooxygenase (357 aa).

Residues Asn-71, Gln-175, Gly-180, Gly-219, and 238 to 241 (QMGT) each bind FMN.

The protein belongs to the nitronate monooxygenase family. NMO class I subfamily. FMN is required as a cofactor.

It catalyses the reaction 3 propionate 3-nitronate + 3 O2 + H2O = 3 3-oxopropanoate + 2 nitrate + nitrite + H2O2 + 3 H(+). Its function is as follows. Nitronate monooxygenase that uses molecular oxygen to catalyze the oxidative denitrification of alkyl nitronates. Acts on propionate 3-nitronate (P3N), the presumed physiological substrate. Probably functions in the detoxification of P3N, a metabolic poison produced by plants and fungi as a defense mechanism. In Staphylococcus haemolyticus (strain JCSC1435), this protein is Probable nitronate monooxygenase.